The chain runs to 302 residues: uncharacterized protein (302 aa).

Helical transmembrane passes span 3–23 (ILGV…SDWF), 39–59 (FVIG…LTSA), 77–97 (SCIC…PIIV), 106–126 (LVYL…FSWI), 128–148 (GVVL…NGSA), 163–183 (FSLV…ELFV), 199–219 (VIGF…VSLA), 227–247 (GMVL…ALAV), and 254–274 (LPAE…LYLF).

It belongs to the Ca(2+):cation antiporter (CaCA) (TC 2.A.19) family.

It localises to the cell membrane. This is an uncharacterized protein from Methanocaldococcus jannaschii (strain ATCC 43067 / DSM 2661 / JAL-1 / JCM 10045 / NBRC 100440) (Methanococcus jannaschii).